The sequence spans 663 residues: UvrABC system protein B (663 aa).

Residues 30–414 form the Helicase ATP-binding domain; it reads EGIKAGKRHQ…IEHTDKMVEQ (385 aa). 43–50 provides a ligand contact to ATP; the sequence is GATGTGKT. The short motif at 96 to 119 is the Beta-hairpin element; it reads YYDYYQPEAYVPSTDTFIEKDASI. Residues 434–600 form the Helicase C-terminal domain; sequence QIDDLLSEIQ…TINKKIHDLI (167 aa). The UVR domain occupies 627 to 662; that stretch reads QKTIDNIEKEMKQAAKDLDFEKATELRDMLFELKAE.

This sequence belongs to the UvrB family. In terms of assembly, forms a heterotetramer with UvrA during the search for lesions. Interacts with UvrC in an incision complex.

It is found in the cytoplasm. The UvrABC repair system catalyzes the recognition and processing of DNA lesions. A damage recognition complex composed of 2 UvrA and 2 UvrB subunits scans DNA for abnormalities. Upon binding of the UvrA(2)B(2) complex to a putative damaged site, the DNA wraps around one UvrB monomer. DNA wrap is dependent on ATP binding by UvrB and probably causes local melting of the DNA helix, facilitating insertion of UvrB beta-hairpin between the DNA strands. Then UvrB probes one DNA strand for the presence of a lesion. If a lesion is found the UvrA subunits dissociate and the UvrB-DNA preincision complex is formed. This complex is subsequently bound by UvrC and the second UvrB is released. If no lesion is found, the DNA wraps around the other UvrB subunit that will check the other stand for damage. This is UvrABC system protein B from Staphylococcus aureus (strain MSSA476).